Reading from the N-terminus, the 146-residue chain is Vascular endothelial growth factor isoform GtVF (146 aa).

The signal sequence occupies residues 1 to 24 (MAAYLLAVAILFCIQGWPSGTVQG). Glutamine 25 is subject to Pyrrolidone carboxylic acid. 3 disulfide bridges follow: cysteine 38–cysteine 80, cysteine 69–cysteine 115, and cysteine 73–cysteine 117. The tract at residues 116–146 (ECRPRSRSGVDSGKRKRNPEEGEPRAKFPFV) is disordered. Residues 133–146 (NPEEGEPRAKFPFV) are compositionally biased toward basic and acidic residues.

The protein belongs to the PDGF/VEGF growth factor family. Snake venom VEGF subfamily. As to quaternary structure, homodimer; disulfide-linked. In terms of tissue distribution, expressed by the venom gland.

Its subcellular location is the secreted. Functionally, snake venom VEGFs that may contribute to venom dispersion and prey subjugation by inducing vascular permeability and hypotension. This protein induces an increase in capillary permeability after intradermal injection, in a VEGFR-2 (KDR) dependent manner. In addition, it provokes a drastic hypotensive effect after intravenous injection. The hypotension is mediated by nitric oxide (NO), which is produced by VEGF-activated endothelium NO synthase. Also induces angiogenesis in vitro. Unlike other crotalid VEGFs, this protein probably interacts with VEGF receptor-2 (KDR). The chain is Vascular endothelial growth factor isoform GtVF from Gloydius tsushimaensis (Tsushima Island pitviper).